Consider the following 246-residue polypeptide: uncharacterized protein (246 aa).

This is an uncharacterized protein from Dictyostelium discoideum (Social amoeba).